Consider the following 468-residue polypeptide: Adenosylhomocysteinase (468 aa).

Positions 57, 132, and 194 each coordinate substrate. 195 to 197 is a binding site for NAD(+); sequence TTT. Substrate-binding residues include lysine 224 and aspartate 228. Residues asparagine 229, 258-263, glutamate 281, asparagine 316, 337-339, and asparagine 382 each bind NAD(+); these read GFGDVG and IGH.

The protein belongs to the adenosylhomocysteinase family. It depends on NAD(+) as a cofactor.

It localises to the cytoplasm. It catalyses the reaction S-adenosyl-L-homocysteine + H2O = L-homocysteine + adenosine. It participates in amino-acid biosynthesis; L-homocysteine biosynthesis; L-homocysteine from S-adenosyl-L-homocysteine: step 1/1. May play a key role in the regulation of the intracellular concentration of adenosylhomocysteine. In Methylobacterium nodulans (strain LMG 21967 / CNCM I-2342 / ORS 2060), this protein is Adenosylhomocysteinase.